The sequence spans 285 residues: MFRLLVLMGFTFFFYHLHASGNLTKYINMKYAYLSFIAIFLLAILTAVQAYLFIKSPEKSGHHHDHDCGCGHDHEHDHEQNKPFYQRYLIYVVFLFPLVSGIFFPIATLDSSIVKTKGFSFKAMESGDHYSQTQYLRPDASLYYAQDSYDKQMKQLFNKYSSKKEISLTDDDFLKGMETIYNYPGEFLGRTIEFHGFAYKGNAINKNQLFVLRFGIIHCIADSGVYGMLVEFPKDMDIKDDEWIHIKGTLASEYYQPFKSTLPVVKVTDWNTIKKPDDPYVYRGF.

4 helical membrane-spanning segments follow: residues 4–24 (LLVL…GNLT), 34–54 (LSFI…YLFI), 89–109 (LIYV…IATL), and 210–230 (FVLR…GMLV).

The protein belongs to the UPF0703 family.

Its subcellular location is the cell membrane. This is UPF0703 protein YcgQ (ycgQ) from Bacillus subtilis (strain 168).